The primary structure comprises 265 residues: MIESQRHSYHLVDPSPWPISGSLGALATTVGGVMYMHSFQGGATLLSLGLIFILYTMFVWWRDVLRESTLEGHHTKAVQLGLRYGFILFIVSEVMFFFAFFWAFFHSSLAPTVEIGGIWPPKGIGVLDPWEIPLLNTLILLSSGAAVTWAHHAILAGKEKRAVYALVATVLLALVFTGFQGMEYYQAPFTISDSIYGSTFFLATGFHGFHVIIGTLFLIVCGIRQYLGQMTKKHHVGFEAAAWYWHFVDVVWLFLFVSIYWWGGI.

6 helical membrane passes run G41 to W61, G85 to F105, T137 to G157, A162 to M182, F200 to V220, and W245 to I265.

It belongs to the cytochrome c oxidase subunit 3 family. Component of the cytochrome c oxidase (complex IV, CIV), a multisubunit enzyme composed of a catalytic core of 3 subunits and several supernumerary subunits. The complex exists as a monomer or a dimer and forms supercomplexes (SCs) in the inner mitochondrial membrane with ubiquinol-cytochrome c oxidoreductase (cytochrome b-c1 complex, complex III, CIII).

It localises to the mitochondrion inner membrane. It carries out the reaction 4 Fe(II)-[cytochrome c] + O2 + 8 H(+)(in) = 4 Fe(III)-[cytochrome c] + 2 H2O + 4 H(+)(out). Functionally, component of the cytochrome c oxidase, the last enzyme in the mitochondrial electron transport chain which drives oxidative phosphorylation. The respiratory chain contains 3 multisubunit complexes succinate dehydrogenase (complex II, CII), ubiquinol-cytochrome c oxidoreductase (cytochrome b-c1 complex, complex III, CIII) and cytochrome c oxidase (complex IV, CIV), that cooperate to transfer electrons derived from NADH and succinate to molecular oxygen, creating an electrochemical gradient over the inner membrane that drives transmembrane transport and the ATP synthase. Cytochrome c oxidase is the component of the respiratory chain that catalyzes the reduction of oxygen to water. Electrons originating from reduced cytochrome c in the intermembrane space (IMS) are transferred via the dinuclear copper A center (CU(A)) of subunit 2 and heme A of subunit 1 to the active site in subunit 1, a binuclear center (BNC) formed by heme A3 and copper B (CU(B)). The BNC reduces molecular oxygen to 2 water molecules using 4 electrons from cytochrome c in the IMS and 4 protons from the mitochondrial matrix. The polypeptide is Cytochrome c oxidase subunit 3 (COX3) (Triticum aestivum (Wheat)).